A 507-amino-acid chain; its full sequence is L-amino-acid oxidase (507 aa).

The N-terminal stretch at 1–19 (MNVLFIFSLLFLAALESCA) is a signal peptide. A disulfide bond links C29 and C192. FAD-binding positions include 62-63 (MA), 82-83 (EA), R90, and 106-109 (GPMR). R109 contributes to the substrate binding site. N-linked (GlcNAc...) asparagine glycosylation is found at N191 and N213. V280 serves as a coordination point for FAD. Residues C348 and C429 are joined by a disulfide bond. A glycan (N-linked (GlcNAc...) asparagine) is linked at N378. Substrate is bound at residue Y389. FAD contacts are provided by residues E473 and 480-485 (GWIDST).

The protein belongs to the flavin monoamine oxidase family. FIG1 subfamily. In terms of assembly, homodimer; non-covalently linked. It depends on FAD as a cofactor. Expressed by the venom gland.

It is found in the secreted. It carries out the reaction an L-alpha-amino acid + O2 + H2O = a 2-oxocarboxylate + H2O2 + NH4(+). The catalysed reaction is L-leucine + O2 + H2O = 4-methyl-2-oxopentanoate + H2O2 + NH4(+). Its function is as follows. Catalyzes an oxidative deamination of predominantly hydrophobic and aromatic L-amino acids, thus producing hydrogen peroxide that may contribute to the diverse toxic effects of this enzyme. Shows activity on L-Leu. Exhibits diverse biological activities, such as hemorrhage, hemolysis, edema, apoptosis of vascular endothelial cells or tumor cell lines, antibacterial and antiparasitic activities. This protein induces platelet aggregation by both hydrogen peroxide production and binding to platelet membrane proteins (that would enhance the sensitivity of platelets to hydrogen peroxide). Effects of snake L-amino oxidases on platelets are controversial, since they either induce aggregation or inhibit agonist-induced aggregation. These different effects are probably due to different experimental conditions. This is L-amino-acid oxidase from Naja atra (Chinese cobra).